The primary structure comprises 306 residues: UDP-N-acetylenolpyruvoylglucosamine reductase (306 aa).

Positions 25–188 constitute an FAD-binding PCMH-type domain; sequence RVGGPADWLF…IEARFRAEPG (164 aa). The active site involves Arg-168. Residues 199–214 show a composition bias toward basic and acidic residues; the sequence is EQLARRDASQPTKDRS. The disordered stretch occupies residues 199-232; sequence EQLARRDASQPTKDRSAGSTFRNPAGYSSTGRAD. The span at 215 to 229 shows a compositional bias: polar residues; sequence AGSTFRNPAGYSSTG. Ser-217 (proton donor) is an active-site residue. Glu-299 is a catalytic residue.

The protein belongs to the MurB family. The cofactor is FAD.

The protein resides in the cytoplasm. The enzyme catalyses UDP-N-acetyl-alpha-D-muramate + NADP(+) = UDP-N-acetyl-3-O-(1-carboxyvinyl)-alpha-D-glucosamine + NADPH + H(+). It functions in the pathway cell wall biogenesis; peptidoglycan biosynthesis. In terms of biological role, cell wall formation. The sequence is that of UDP-N-acetylenolpyruvoylglucosamine reductase from Paracoccus denitrificans (strain Pd 1222).